The following is a 172-amino-acid chain: Ferritin-2 heavy chain (172 aa).

One can recognise a Ferritin-like diiron domain in the interval 8–157 (QSFATECENA…DYLTETQRVG (150 aa)). Fe cation-binding residues include Glu25, Glu60, His63, Glu105, and Gln139.

It belongs to the ferritin family. As to quaternary structure, oligomer of 24 subunits. The functional molecule forms a roughly spherical shell with a diameter of 12 nm and contains a central cavity into which the insoluble mineral iron core is deposited.

It carries out the reaction 4 Fe(2+) + O2 + 4 H(+) = 4 Fe(3+) + 2 H2O. In terms of biological role, stores iron in a soluble, non-toxic, readily available form. Important for iron homeostasis. Has ferroxidase activity. Iron is taken up in the ferrous form and deposited as ferric hydroxides after oxidation. The sequence is that of Ferritin-2 heavy chain (SCM-2) from Schistosoma mansoni (Blood fluke).